Consider the following 568-residue polypeptide: MFS-type efflux transporter phmH (568 aa).

The span at 1-11 (MVSGTDTTEVG) shows a compositional bias: polar residues. The disordered stretch occupies residues 1–39 (MVSGTDTTEVGATTKAPPSEGTEGILDDHSSNSQPQAEK). 7 helical membrane-spanning segments follow: residues 45–65 (YPLSFWLAFLGLCCTGLVSAL), 101–121 (YVMIGATIIFILGSGLCGGSS), 134–154 (GIGAGGINMLIDMIICDLVPM), 161–181 (IGLLFLFVSLGATIGPFVGGI), 199–219 (IFYINLPFGGVALLLLILFLH), 237–257 (VIGNSILIGATFAILYALTYG), and 268–288 (IAAPLTIGLVGLVAAFFWEMS). N-linked (GlcNAc...) asparagine glycosylation occurs at asparagine 303. Transmembrane regions (helical) follow at residues 307–327 (AAAFFISFMCMLLAFWINFFY), 344–364 (VYTLPRAIAFPLFAAVGGAIV), 372–392 (TVHLVSTGIMPLVMGLSSILD), 399–419 (EWVIWQLLFGVSGGMMISTTL), 437–457 (TWSFVRSLGTIWGLSIPAAIF), and 515–535 (IGIVFGGVTFLSVFFEKEIHL). A glycan (N-linked (GlcNAc...) asparagine) is linked at asparagine 563.

This sequence belongs to the major facilitator superfamily.

The protein resides in the cell membrane. MFS-type efflux transporter; part of the gene cluster that mediates the biosynthesis of thethe mycotoxins phomacins, leucine-derived cytochalasans with potent actin polymerization-inhibitory activities and monocot-specific antigerminative activities. PhmH might be involved in the excretion of phomacins. The protein is MFS-type efflux transporter phmH of Phaeosphaeria nodorum (strain SN15 / ATCC MYA-4574 / FGSC 10173) (Glume blotch fungus).